A 193-amino-acid chain; its full sequence is Ion-translocating oxidoreductase complex subunit A (193 aa).

Helical transmembrane passes span leucine 5–leucine 25, isoleucine 39–isoleucine 59, phenylalanine 62–alanine 82, valine 102–leucine 122, valine 134–leucine 154, and alanine 170–leucine 190.

This sequence belongs to the NqrDE/RnfAE family. As to quaternary structure, the complex is composed of six subunits: RnfA, RnfB, RnfC, RnfD, RnfE and RnfG.

It localises to the cell inner membrane. In terms of biological role, part of a membrane-bound complex that couples electron transfer with translocation of ions across the membrane. The chain is Ion-translocating oxidoreductase complex subunit A from Azoarcus sp. (strain BH72).